The sequence spans 701 residues: Peptide transporter 3 (701 aa).

Helical transmembrane passes span 29 to 49 (FSFY…HEFS), 55 to 75 (FIYH…SIMA), 91 to 111 (IYVV…SYPI), 119 to 139 (GLFV…AFAA), 154 to 174 (FSFF…ITPI), 188 to 208 (FPLA…LFLM), 269 to 289 (GLLN…LFDQ), 318 to 338 (INPV…YPAL), and 351 to 371 (AVGG…QLKV). 2 N-linked (GlcNAc...) asparagine glycosylation sites follow: Asn-391 and Asn-432. Helical transmembrane passes span 575-595 (ILWS…LSVT), 611-631 (VLTA…MMIS), and 641-661 (LEFF…ILLA).

Belongs to the major facilitator superfamily. Proton-dependent oligopeptide transporter (POT/PTR) (TC 2.A.17) family. Expressed in the AVA interneuron.

Its subcellular location is the membrane. Neuron-specific, H(+)-coupled oligopeptide transporter with broad specificity towards di- and tripeptides in a Na(+) and Cl(-)-independent manner. Shows H(+) channel activity in the absence of peptide substrates. This chain is Peptide transporter 3 (pept-3), found in Caenorhabditis elegans.